We begin with the raw amino-acid sequence, 486 residues long: uncharacterized protein (486 aa).

LRR repeat units follow at residues 18-39 (NLKK…KKLV), 43-59 (ELHI…NIPE), 60-81 (NIKS…TKLK), 82-103 (NITY…ILPH), 104-125 (SIEF…NNLV), 126-147 (NLKK…FPIS), 148-168 (IVEL…EKLI), 169-190 (NLKK…IKFP), and 198-219 (DYQS…IEYE).

This is an uncharacterized protein from Amsacta moorei entomopoxvirus (AmEPV).